The following is a 232-amino-acid chain: Ribosomal RNA small subunit methyltransferase G (232 aa).

Residues G93, L98, 144 to 145, and R163 contribute to the S-adenosyl-L-methionine site; that span reads VE.

The protein belongs to the methyltransferase superfamily. RNA methyltransferase RsmG family.

Its subcellular location is the cytoplasm. It carries out the reaction guanosine(527) in 16S rRNA + S-adenosyl-L-methionine = N(7)-methylguanosine(527) in 16S rRNA + S-adenosyl-L-homocysteine. Functionally, specifically methylates the N7 position of guanine in position 527 of 16S rRNA. The chain is Ribosomal RNA small subunit methyltransferase G from Burkholderia pseudomallei (strain 1106a).